Here is an 84-residue protein sequence, read N- to C-terminus: MPIIKSAIERVRTSEKAEARNASQLSQMRTAIKKFDKAKLAGADNLDDLYKAAISAIDRAHSKGLIKANKAARDKSRLSARYAK.

It belongs to the bacterial ribosomal protein bS20 family.

Its function is as follows. Binds directly to 16S ribosomal RNA. This Limosilactobacillus reuteri (strain DSM 20016) (Lactobacillus reuteri) protein is Small ribosomal subunit protein bS20.